Consider the following 241-residue polypeptide: tRNA pseudouridine synthase A (241 aa).

Catalysis depends on D53, which acts as the Nucleophile. Residue Y110 participates in substrate binding.

Belongs to the tRNA pseudouridine synthase TruA family. Homodimer.

The catalysed reaction is uridine(38/39/40) in tRNA = pseudouridine(38/39/40) in tRNA. Functionally, formation of pseudouridine at positions 38, 39 and 40 in the anticodon stem and loop of transfer RNAs. This is tRNA pseudouridine synthase A from Malacoplasma penetrans (strain HF-2) (Mycoplasma penetrans).